Here is a 390-residue protein sequence, read N- to C-terminus: Phosphoglycerate kinase (390 aa).

Substrate is bound by residues 19 to 21 (DYN), R34, 57 to 60 (HLGR), R115, and R148. Residues K198, G289, E320, and 347 to 350 (GGDS) contribute to the ATP site.

It belongs to the phosphoglycerate kinase family. Monomer.

Its subcellular location is the cytoplasm. The enzyme catalyses (2R)-3-phosphoglycerate + ATP = (2R)-3-phospho-glyceroyl phosphate + ADP. The protein operates within carbohydrate degradation; glycolysis; pyruvate from D-glyceraldehyde 3-phosphate: step 2/5. The polypeptide is Phosphoglycerate kinase (pgk) (Thermus thermophilus (strain ATCC 27634 / DSM 579 / HB8)).